Consider the following 145-residue polypeptide: Deoxyuridine 5'-triphosphate nucleotidohydrolase (145 aa).

Substrate is bound by residues 62–64 (RSG), asparagine 75, 79–81 (TVD), and lysine 89.

This sequence belongs to the dUTPase family. Requires Mg(2+) as cofactor.

It carries out the reaction dUTP + H2O = dUMP + diphosphate + H(+). It functions in the pathway pyrimidine metabolism; dUMP biosynthesis; dUMP from dCTP (dUTP route): step 2/2. In terms of biological role, this enzyme is involved in nucleotide metabolism: it produces dUMP, the immediate precursor of thymidine nucleotides and it decreases the intracellular concentration of dUTP so that uracil cannot be incorporated into DNA. This chain is Deoxyuridine 5'-triphosphate nucleotidohydrolase, found in Helicobacter pylori (strain Shi470).